The following is a 207-amino-acid chain: Ribosomal RNA small subunit methyltransferase G (207 aa).

S-adenosyl-L-methionine is bound by residues G73, L78, 124–125 (VE), and R139.

It belongs to the methyltransferase superfamily. RNA methyltransferase RsmG family.

Its subcellular location is the cytoplasm. The enzyme catalyses guanosine(527) in 16S rRNA + S-adenosyl-L-methionine = N(7)-methylguanosine(527) in 16S rRNA + S-adenosyl-L-homocysteine. Functionally, specifically methylates the N7 position of guanine in position 527 of 16S rRNA. The protein is Ribosomal RNA small subunit methyltransferase G of Salmonella choleraesuis (strain SC-B67).